Consider the following 159-residue polypeptide: Phosphopantetheine adenylyltransferase (159 aa).

Threonine 10 contacts substrate. ATP-binding positions include 10 to 11 and histidine 18; that span reads TF. The substrate site is built by lysine 42, methionine 74, and arginine 88. ATP contacts are provided by residues 89–91, glutamate 99, and 124–130; these read GLR and WSFISSS.

This sequence belongs to the bacterial CoaD family. Homohexamer. It depends on Mg(2+) as a cofactor.

It is found in the cytoplasm. It catalyses the reaction (R)-4'-phosphopantetheine + ATP + H(+) = 3'-dephospho-CoA + diphosphate. It participates in cofactor biosynthesis; coenzyme A biosynthesis; CoA from (R)-pantothenate: step 4/5. Reversibly transfers an adenylyl group from ATP to 4'-phosphopantetheine, yielding dephospho-CoA (dPCoA) and pyrophosphate. The chain is Phosphopantetheine adenylyltransferase from Salmonella paratyphi A (strain ATCC 9150 / SARB42).